The sequence spans 200 residues: Ciliary neurotrophic factor (200 aa).

This sequence belongs to the CNTF family. As to expression, nervous system.

It is found in the cytoplasm. Its function is as follows. CNTF is a survival factor for various neuronal cell types. Seems to prevent the degeneration of motor axons after axotomy. In Rattus norvegicus (Rat), this protein is Ciliary neurotrophic factor (Cntf).